Here is an 804-residue protein sequence, read N- to C-terminus: Leucine--tRNA ligase (804 aa).

The 'HIGH' region signature appears at 40–51 (PYPSGAGLHVGH). The 'KMSKS' region signature appears at 576–580 (KMSKS). Position 579 (Lys579) interacts with ATP.

The protein belongs to the class-I aminoacyl-tRNA synthetase family.

It localises to the cytoplasm. The enzyme catalyses tRNA(Leu) + L-leucine + ATP = L-leucyl-tRNA(Leu) + AMP + diphosphate. This Staphylococcus saprophyticus subsp. saprophyticus (strain ATCC 15305 / DSM 20229 / NCIMB 8711 / NCTC 7292 / S-41) protein is Leucine--tRNA ligase.